Consider the following 520-residue polypeptide: uncharacterized protein (520 aa).

The next 9 membrane-spanning stretches (helical) occupy residues 38-58 (VVLI…IPGG), 84-104 (IAIY…GIFN), 105-125 (IGIS…ILKV), 138-158 (IITV…VATL), 167-187 (VVSA…LVET), 220-240 (FGWL…AVVL), 271-291 (FLSF…VYTA), 318-338 (IAIG…SVLI), and 355-375 (ASLV…MVYF).

Its subcellular location is the cell membrane. This is an uncharacterized protein from Mycoplasma genitalium (strain ATCC 33530 / DSM 19775 / NCTC 10195 / G37) (Mycoplasmoides genitalium).